The following is a 108-amino-acid chain: Nucleoid-associated protein BQ02190 (108 aa).

Belongs to the YbaB/EbfC family. Homodimer.

The protein resides in the cytoplasm. The protein localises to the nucleoid. Functionally, binds to DNA and alters its conformation. May be involved in regulation of gene expression, nucleoid organization and DNA protection. This chain is Nucleoid-associated protein BQ02190, found in Bartonella quintana (strain Toulouse) (Rochalimaea quintana).